Reading from the N-terminus, the 1123-residue chain is Eukaryotic translation initiation factor 2-alpha kinase PK4 (1123 aa).

A disordered region spans residues 1-30 (MKKRIRSSYKVGSSNKYHKKNYTDNEKDKK). Residues 21 to 30 (NYTDNEKDKK) are compositionally biased toward basic and acidic residues. ATP is bound by residues 245-253 (IGQGGFGSV) and Lys-270. 3 disordered regions span residues 409 to 493 (FYSD…NDEG), 572 to 609 (RNED…NELD), and 742 to 800 (ENDD…DDDI). Residues 419 to 428 (KNKENPEKNH) are compositionally biased toward basic and acidic residues. Positions 455-477 (HKLKKRKNKKKKSKKKRKSKSKI) are enriched in basic residues. 5 consecutive repeat copies span residues 576–582 (DKNGLDG), 583–589 (DKNGLDG), 590–596 (DKNGLDG), 597–603 (DKNGLDG), and 604–610 (DKNELDD). The interval 576–610 (DKNGLDGDKNGLDGDKNGLDGDKNGLDGDKNELDD) is 5 X 7 AA tandem repeat of D-K-N-[GE]-L-D-[GD]. One can recognise a Protein kinase domain in the interval 678–1049 (TNVESINTNG…KIKVLLDPHL (372 aa)). Positions 743–754 (NDDDDDDDDDDN) are enriched in acidic residues. The active-site Proton acceptor is Asp-886. At Thr-953 the chain carries Phosphothreonine.

This sequence belongs to the protein kinase superfamily. Ser/Thr protein kinase family. GCN2 subfamily. May form oligomers in response to stress; oligomerization may result in catalytic activity. Interacts with BIP; the interaction is disrupted in response to stress. Post-translationally, auto-phosphorylated.

It is found in the endoplasmic reticulum membrane. The enzyme catalyses L-seryl-[protein] + ATP = O-phospho-L-seryl-[protein] + ADP + H(+). It catalyses the reaction L-threonyl-[protein] + ATP = O-phospho-L-threonyl-[protein] + ADP + H(+). Its activity is regulated as follows. Dissociation from BIP and oligomerization, may results autophosphorylation and kinase activity induction. During the asexual blood stage, phosphorylates translation factor eIF2alpha in late schizonts resulting in protein translation inhibition. Plays a role in trophozoite differentiation into schizonts. The protein is Eukaryotic translation initiation factor 2-alpha kinase PK4 of Plasmodium falciparum.